Reading from the N-terminus, the 600-residue chain is 1-deoxy-D-xylulose-5-phosphate synthase (600 aa).

Thiamine diphosphate contacts are provided by residues His57 and 98 to 100; that span reads GHA. Asp125 serves as a coordination point for Mg(2+). Residues 126–127, Asn155, Tyr264, and Glu343 contribute to the thiamine diphosphate site; that span reads AS. Asn155 lines the Mg(2+) pocket.

The protein belongs to the transketolase family. DXPS subfamily. In terms of assembly, homodimer. Mg(2+) is required as a cofactor. The cofactor is thiamine diphosphate.

The catalysed reaction is D-glyceraldehyde 3-phosphate + pyruvate + H(+) = 1-deoxy-D-xylulose 5-phosphate + CO2. The protein operates within metabolic intermediate biosynthesis; 1-deoxy-D-xylulose 5-phosphate biosynthesis; 1-deoxy-D-xylulose 5-phosphate from D-glyceraldehyde 3-phosphate and pyruvate: step 1/1. In terms of biological role, catalyzes the acyloin condensation reaction between C atoms 2 and 3 of pyruvate and glyceraldehyde 3-phosphate to yield 1-deoxy-D-xylulose-5-phosphate (DXP). This chain is 1-deoxy-D-xylulose-5-phosphate synthase, found in Fusobacterium nucleatum subsp. nucleatum (strain ATCC 25586 / DSM 15643 / BCRC 10681 / CIP 101130 / JCM 8532 / KCTC 2640 / LMG 13131 / VPI 4355).